Here is a 114-residue protein sequence, read N- to C-terminus: DNA-(apurinic or apyrimidinic site) endonuclease (114 aa).

The protein belongs to the apurinic/apyrimidinic endonuclease family. Interacts with host Ung; this interaction allows the viral AP endonuclease to localize to newly formed AP sites and cleave them, leading to inhibition of bacterial growth.

Performs endonucleolytic cleavage at abasic sites, which are generated by the base-excision activity of host Ung. The cleavage generates a 5'-deoxyribose phosphate and 3'-hydroxyl end. The sites are specifically recognized through the formation of a complex with host Ung. The viral endonucleolytic activity damages the host DNA, blocks host DNA replication and induces cell division arrest. This may provide an advantage for the phage and save nucleotides for the viral replication since it specifically targets the host DNA, which possesses more misincorporated uracils than the viral genome. This chain is DNA-(apurinic or apyrimidinic site) endonuclease, found in Escherichia phage T5 (Enterobacteria phage T5).